A 165-amino-acid chain; its full sequence is MTNKKRRQRGSRTHGGGTHKNRRGAGHRGGRGAAGRAKHEFHNYGPLGKYGFKRPESAQTEVLEVTVQKLDEDAALYAADDLAEEDGDAYVIDARDVVEDGYEADVVKVLGGGQVRRELRVTADAFTAGAVELIEEAGGEATLSERAEEAADESENTSDDEDDEA.

A compositionally biased stretch (basic residues) spans 1–30 (MTNKKRRQRGSRTHGGGTHKNRRGAGHRGG). 2 disordered regions span residues 1-39 (MTNK…RAKH) and 137-165 (AGGE…DDEA). Acidic residues predominate over residues 150 to 165 (AADESENTSDDEDDEA).

It belongs to the universal ribosomal protein uL15 family. In terms of assembly, part of the 50S ribosomal subunit.

Functionally, binds to the 23S rRNA. This chain is Large ribosomal subunit protein uL15, found in Halorubrum lacusprofundi (strain ATCC 49239 / DSM 5036 / JCM 8891 / ACAM 34).